The sequence spans 534 residues: MAKIDLSKYGITGATEIVYNPSYELLFEEETKSTNEGYEVGKESELGAVDVMTGIYTGRSPKDKYIVVDENSKDTVWWTSDEYKNDNHPMSEDVWAKVKDIAKAELSNKKLFVVDAFCGANKDTRMAVRFIVEVAWQAHFVTNMFIKPTAEELENFEPDFVVYNASKAKVENYAELGLNSETCVAFNITSHEQVIINTWYGGEMKKGMFSMMNYYLPLKGIASMHCSANTDKNGENTAIFFGLSGTGKTTLSTDPKRLLIGDDEHGWDDNGVFNFEGGCYAKVINLDKDSEPDIYNAIKRNALLENVTLDENGKIDFADKSVTENTRVSYPINHIENIVRPISSAPAAKNVIFLSADAFGVLPPVSILTPEQTQYYFLSGFTAKLAGTERGITEPTPTFSACFGQAFLELHPTKYAAELVKKMEKSGAKAYLVNTGWNGTGKRISIKDTRGIIDAILSGAINTAPTKKIPMFNFEVPTELPGVDPAILDPRDTYADASEWETKAKDLAARFNKNFVKYTGNEAGKALVAAGPQL.

Substrate is bound by residues Arg59, Tyr200, and Lys206. ATP contacts are provided by residues Lys206, His225, and 242–250; that span reads GLSGTGKTT. Residues Lys206 and His225 each contribute to the Mn(2+) site. A Mn(2+)-binding site is contributed by Asp263. ATP is bound by residues Glu291, Arg327, 443-444, and Thr449; that span reads RI. A substrate-binding site is contributed by Arg327.

Belongs to the phosphoenolpyruvate carboxykinase (ATP) family. Mn(2+) serves as cofactor.

The protein resides in the cytoplasm. The catalysed reaction is oxaloacetate + ATP = phosphoenolpyruvate + ADP + CO2. It participates in carbohydrate biosynthesis; gluconeogenesis. Functionally, involved in the gluconeogenesis. Catalyzes the conversion of oxaloacetate (OAA) to phosphoenolpyruvate (PEP) through direct phosphoryl transfer between the nucleoside triphosphate and OAA. The chain is Phosphoenolpyruvate carboxykinase (ATP) from Lachnospira eligens (strain ATCC 27750 / DSM 3376 / VPI C15-48 / C15-B4) (Eubacterium eligens).